Consider the following 300-residue polypeptide: MGMDMIEMIEKAEILMEALPFIQKFYGKIFVIKYGGHAMIDEKAKNWTAQDVVLLKYVGINPVVVHGGGPEINKAMEKMGKKPEFVHGLRVTDEETLDIVEMVLAGKINGDIVSKLSKFGGKAVGLSGKSGRIILAKKKLKKIKTEKGEEIEVDLGRVGETVEVNTELLEILINNGYIPVVSPIGLDEKGEAYNLNADTVAGDIAGALKAEKLILITDVDGIMDDINNPETLHRKLTASELKEMIEDGRIKGGMIPKAESALYALEHGVKSVHIINGKIPHALLLEIFTEEGIGTMITRD.

Residues 68–69 (GG), Arg90, and Asn194 each bind substrate.

The protein belongs to the acetylglutamate kinase family. ArgB subfamily.

The protein localises to the cytoplasm. It carries out the reaction N-acetyl-L-glutamate + ATP = N-acetyl-L-glutamyl 5-phosphate + ADP. Its pathway is amino-acid biosynthesis; L-arginine biosynthesis; N(2)-acetyl-L-ornithine from L-glutamate: step 2/4. Catalyzes the ATP-dependent phosphorylation of N-acetyl-L-glutamate. This is Acetylglutamate kinase from Methanocaldococcus jannaschii (strain ATCC 43067 / DSM 2661 / JAL-1 / JCM 10045 / NBRC 100440) (Methanococcus jannaschii).